A 277-amino-acid chain; its full sequence is Large ribosomal subunit protein uL2 (277 aa).

The tract at residues 219-277 is disordered; that stretch reads TVRGSVMNPNDHPHGGGEGRSPIGHPSPRTPWGKPALGYKTRKNKKYSDRFIVKRRHDK.

Belongs to the universal ribosomal protein uL2 family. In terms of assembly, part of the 50S ribosomal subunit. Forms a bridge to the 30S subunit in the 70S ribosome.

One of the primary rRNA binding proteins. Required for association of the 30S and 50S subunits to form the 70S ribosome, for tRNA binding and peptide bond formation. It has been suggested to have peptidyltransferase activity; this is somewhat controversial. Makes several contacts with the 16S rRNA in the 70S ribosome. The polypeptide is Large ribosomal subunit protein uL2 (Clostridium botulinum (strain ATCC 19397 / Type A)).